The following is a 274-amino-acid chain: Large ribosomal subunit protein uL2 (274 aa).

The disordered stretch occupies residues A224–Y256. Residues D229 to V246 show a composition bias toward basic and acidic residues.

It belongs to the universal ribosomal protein uL2 family. As to quaternary structure, part of the 50S ribosomal subunit. Forms a bridge to the 30S subunit in the 70S ribosome.

Functionally, one of the primary rRNA binding proteins. Required for association of the 30S and 50S subunits to form the 70S ribosome, for tRNA binding and peptide bond formation. It has been suggested to have peptidyltransferase activity; this is somewhat controversial. Makes several contacts with the 16S rRNA in the 70S ribosome. This chain is Large ribosomal subunit protein uL2, found in Acidovorax sp. (strain JS42).